The sequence spans 476 residues: MKVRVRLAPSPTGTLHIGTARTAVFNWLFARHQGGEFLVRIEDTDKERSKPEFTTNILEGLKWLGLNWDEQPIIQSQHVDDHRAAIQKLLDLDLAYRCYASETELEAMRETQKAQGQAPRYDNRHRNLNPEQEAAFQSEGRSAVVRFRIDDVAAISWKDLVRGPMHWRGSDLGGDMVISRRAPAKEIGDPLYNLVVVVDDAAMSISHVIRGEDHIANTAKQLLIYEALGLPIPQFAHTPLILNSEGRKLSKRDGVTSISDFQAMGYTAEAMANYMTLLGWSVPEGTDERFTLQQAATVFSFDRVNKAGAKFDWDKLNWLNSQVLHDLPKDQLLHELKPLWSEAGWALPEENWCLDLAELLGPSLTLLKDGVDQARPFFEEPTLQADGLEQLAMEGAKAGLSNLLDQLDSTSWDGFDVKQAQQLLTNAAQAANVKKGVIMKSLRAALLGRLQGPDLITTWGLLARIGQDLNRLRRCL.

The 'HIGH' region signature appears at 9 to 19; the sequence is PSPTGTLHIGT. The 'KMSKS' region signature appears at 248 to 252; it reads KLSKR. Lys-251 provides a ligand contact to ATP.

This sequence belongs to the class-I aminoacyl-tRNA synthetase family. Glutamate--tRNA ligase type 1 subfamily. As to quaternary structure, monomer.

It localises to the cytoplasm. The enzyme catalyses tRNA(Glu) + L-glutamate + ATP = L-glutamyl-tRNA(Glu) + AMP + diphosphate. Functionally, catalyzes the attachment of glutamate to tRNA(Glu) in a two-step reaction: glutamate is first activated by ATP to form Glu-AMP and then transferred to the acceptor end of tRNA(Glu). The sequence is that of Glutamate--tRNA ligase from Prochlorococcus marinus (strain MIT 9303).